A 376-amino-acid polypeptide reads, in one-letter code: Serpin B6 (376 aa).

M1 carries the N-acetylmethionine modification. A Phosphoserine modification is found at S151. K195 is subject to N6-acetyllysine.

It belongs to the serpin family. Ov-serpin subfamily. As to quaternary structure, forms a complex with the monomeric form of beta-tryptase.

The protein resides in the cytoplasm. Its function is as follows. Inhibitor of cathepsin G, kallikrein-8 and thrombin. May play an important role in the inner ear in the protection against leakage of lysosomal content during stress. May be involved in the regulation of serine proteinases present in the brain or extravasated from the blood. In Macaca fascicularis (Crab-eating macaque), this protein is Serpin B6 (SERPINB6).